We begin with the raw amino-acid sequence, 141 residues long: Nucleoside diphosphate kinase (141 aa).

ATP contacts are provided by Lys-11, Phe-59, Arg-87, Thr-93, Arg-104, and Asn-114. His-117 (pros-phosphohistidine intermediate) is an active-site residue.

The protein belongs to the NDK family. Homotetramer. Requires Mg(2+) as cofactor.

The protein resides in the cytoplasm. The catalysed reaction is a 2'-deoxyribonucleoside 5'-diphosphate + ATP = a 2'-deoxyribonucleoside 5'-triphosphate + ADP. The enzyme catalyses a ribonucleoside 5'-diphosphate + ATP = a ribonucleoside 5'-triphosphate + ADP. In terms of biological role, major role in the synthesis of nucleoside triphosphates other than ATP. The ATP gamma phosphate is transferred to the NDP beta phosphate via a ping-pong mechanism, using a phosphorylated active-site intermediate. This is Nucleoside diphosphate kinase from Variovorax paradoxus (strain S110).